We begin with the raw amino-acid sequence, 453 residues long: BPI fold-containing family B member 6 (453 aa).

The N-terminal stretch at 1–18 (MLRILCLALCSLLTGTRA) is a signal peptide. Asn-114 is a glycosylation site (N-linked (GlcNAc...) asparagine). The cysteines at positions 137 and 174 are disulfide-linked. An N-linked (GlcNAc...) asparagine glycan is attached at Asn-190.

Belongs to the BPI/LBP/Plunc superfamily. BPI/LBP family. In terms of tissue distribution, detected at very low levels in normal tonsils, and at higher levels in hypertrophic tonsils.

It is found in the secreted. In Homo sapiens (Human), this protein is BPI fold-containing family B member 6 (BPIFB6).